Here is a 56-residue protein sequence, read N- to C-terminus: UPF0391 membrane protein Noc_0484 (56 aa).

The next 2 helical transmembrane spans lie at 6–26 and 29–49; these read VTFLIVALVAALLGFTGIAGI and EIAWILFVVGIILFVVFLVLG.

Belongs to the UPF0391 family.

The protein localises to the cell membrane. The chain is UPF0391 membrane protein Noc_0484 from Nitrosococcus oceani (strain ATCC 19707 / BCRC 17464 / JCM 30415 / NCIMB 11848 / C-107).